We begin with the raw amino-acid sequence, 316 residues long: Transaldolase (316 aa).

Catalysis depends on Lys-131, which acts as the Schiff-base intermediate with substrate.

It belongs to the transaldolase family. Type 1 subfamily. Homodimer.

The protein resides in the cytoplasm. The catalysed reaction is D-sedoheptulose 7-phosphate + D-glyceraldehyde 3-phosphate = D-erythrose 4-phosphate + beta-D-fructose 6-phosphate. Its pathway is carbohydrate degradation; pentose phosphate pathway; D-glyceraldehyde 3-phosphate and beta-D-fructose 6-phosphate from D-ribose 5-phosphate and D-xylulose 5-phosphate (non-oxidative stage): step 2/3. Functionally, transaldolase is important for the balance of metabolites in the pentose-phosphate pathway. In Buchnera aphidicola subsp. Acyrthosiphon pisum (strain 5A), this protein is Transaldolase.